The primary structure comprises 751 residues: Catalase-peroxidase (751 aa).

The disordered stretch occupies residues 1-21 (MSNESKCPFHQTAGGGTTNRD). The tryptophyl-tyrosyl-methioninium (Trp-Tyr) (with M-270) cross-link spans 90-244 (WHSAGTYRIG…LAAVQMGLIY (155 aa)). The active-site Proton acceptor is the His-91. The disordered stretch occupies residues 195–227 (YGKDQVKAQPPGQGDLVAEPAKHGEEQNRDLSA). The span at 214 to 227 (PAKHGEEQNRDLSA) shows a compositional bias: basic and acidic residues. The tryptophyl-tyrosyl-methioninium (Tyr-Met) (with W-90) cross-link spans 244–270 (YVNPEGPEGNPDPVASGKDIRETFGRM). His-285 serves as a coordination point for heme b. A disordered region spans residues 364 to 385 (GAHQWRPKDGKGAGTVPDAHDP).

It belongs to the peroxidase family. Peroxidase/catalase subfamily. In terms of assembly, homodimer or homotetramer. Requires heme b as cofactor. Post-translationally, formation of the three residue Trp-Tyr-Met cross-link is important for the catalase, but not the peroxidase activity of the enzyme.

The catalysed reaction is H2O2 + AH2 = A + 2 H2O. The enzyme catalyses 2 H2O2 = O2 + 2 H2O. Its function is as follows. Bifunctional enzyme with both catalase and broad-spectrum peroxidase activity. This is Catalase-peroxidase from Pseudomonas putida (strain ATCC 47054 / DSM 6125 / CFBP 8728 / NCIMB 11950 / KT2440).